The chain runs to 204 residues: Proteasome subunit beta (204 aa).

The propeptide at 1–8 (MDDKILEG) is removed in mature form; by autocatalysis. Thr-9 serves as the catalytic Nucleophile.

This sequence belongs to the peptidase T1B family. The 20S proteasome core is composed of 14 alpha and 14 beta subunits that assemble into four stacked heptameric rings, resulting in a barrel-shaped structure. The two inner rings, each composed of seven catalytic beta subunits, are sandwiched by two outer rings, each composed of seven alpha subunits. The catalytic chamber with the active sites is on the inside of the barrel. Has a gated structure, the ends of the cylinder being occluded by the N-termini of the alpha-subunits. Is capped at one or both ends by the proteasome regulatory ATPase, PAN.

Its subcellular location is the cytoplasm. It catalyses the reaction Cleavage of peptide bonds with very broad specificity.. Its activity is regulated as follows. The formation of the proteasomal ATPase PAN-20S proteasome complex, via the docking of the C-termini of PAN into the intersubunit pockets in the alpha-rings, triggers opening of the gate for substrate entry. Interconversion between the open-gate and close-gate conformations leads to a dynamic regulation of the 20S proteasome proteolysis activity. Its function is as follows. Component of the proteasome core, a large protease complex with broad specificity involved in protein degradation. In Methanobrevibacter smithii (strain ATCC 35061 / DSM 861 / OCM 144 / PS), this protein is Proteasome subunit beta.